We begin with the raw amino-acid sequence, 399 residues long: Na(+)/H(+) antiporter NhaA (399 aa).

Transmembrane regions (helical) follow at residues 12–32 (LDIA…IAAN), 60–80 (LLLW…GLEI), 94–114 (LAAL…LIYA), 126–146 (GWAI…TLLG), 155–175 (IFLT…IAFF), 178–198 (ASLS…LIGL), 206–226 (LWPY…SGVH), 263–283 (PWVT…VSLA), 284–304 (GLPP…GLFL), 336–356 (GVAL…TLAF), and 372–392 (LGVL…LRLS).

This sequence belongs to the NhaA Na(+)/H(+) (TC 2.A.33) antiporter family.

It is found in the cell inner membrane. The enzyme catalyses Na(+)(in) + 2 H(+)(out) = Na(+)(out) + 2 H(+)(in). Na(+)/H(+) antiporter that extrudes sodium in exchange for external protons. The protein is Na(+)/H(+) antiporter NhaA of Rhodospirillum rubrum (strain ATCC 11170 / ATH 1.1.1 / DSM 467 / LMG 4362 / NCIMB 8255 / S1).